Reading from the N-terminus, the 121-residue chain is Prismalin-14 (121 aa).

An N-terminal signal peptide occupies residues 1 to 16; that stretch reads MRSLLVLLALAACASA. Residue glutamine 17 is modified to Pyrrolidone carboxylic acid. Repeat copies occupy residues 48–51, 52–55, 56–59, and 60–63. Residues 48 to 63 are 4 X 4 AA approximate tandem repeats of P-I-Y-R; that stretch reads PIYRPIYRPIYYPQII.

Expressed only at the mantle edge where it is found predominantly in the inner side of the outer mantle fold.

Displays inhibitory activity against calcium carbonate precipitation, binds calcium and affects crystallization of calcium carbonate in vitro. May be involved in calcification of the prismatic layer of the shell. The chain is Prismalin-14 from Pinctada fucata (Akoya pearl oyster).